A 39-amino-acid polypeptide reads, in one-letter code: Photosystem II reaction center protein J (39 aa).

The helical transmembrane segment at 7–27 (IPLWIVAVVAGMGVIAVVGIF) threads the bilayer.

It belongs to the PsbJ family. As to quaternary structure, PSII is composed of 1 copy each of membrane proteins PsbA, PsbB, PsbC, PsbD, PsbE, PsbF, PsbH, PsbI, PsbJ, PsbK, PsbL, PsbM, PsbT, PsbX, PsbY, PsbZ, Psb30/Ycf12, peripheral proteins PsbO, CyanoQ (PsbQ), PsbU, PsbV and a large number of cofactors. It forms dimeric complexes.

Its subcellular location is the cellular thylakoid membrane. Functionally, this protein is a component of the reaction center of photosystem II. One of the components of the core complex of photosystem II (PSII). PSII is a light-driven water:plastoquinone oxidoreductase that uses light energy to abstract electrons from H(2)O, generating O(2) and a proton gradient subsequently used for ATP formation. It consists of a core antenna complex that captures photons, and an electron transfer chain that converts photonic excitation into a charge separation. This chain is Photosystem II reaction center protein J, found in Picosynechococcus sp. (strain ATCC 27264 / PCC 7002 / PR-6) (Agmenellum quadruplicatum).